The chain runs to 420 residues: Light-independent protochlorophyllide reductase subunit N (420 aa).

[4Fe-4S] cluster-binding residues include C21, C46, and C103.

Belongs to the BchN/ChlN family. Protochlorophyllide reductase is composed of three subunits; BchL, BchN and BchB. Forms a heterotetramer of two BchB and two BchN subunits. [4Fe-4S] cluster serves as cofactor.

It carries out the reaction chlorophyllide a + oxidized 2[4Fe-4S]-[ferredoxin] + 2 ADP + 2 phosphate = protochlorophyllide a + reduced 2[4Fe-4S]-[ferredoxin] + 2 ATP + 2 H2O. Its pathway is porphyrin-containing compound metabolism; bacteriochlorophyll biosynthesis (light-independent). Functionally, component of the dark-operative protochlorophyllide reductase (DPOR) that uses Mg-ATP and reduced ferredoxin to reduce ring D of protochlorophyllide (Pchlide) to form chlorophyllide a (Chlide). This reaction is light-independent. The NB-protein (BchN-BchB) is the catalytic component of the complex. This is Light-independent protochlorophyllide reductase subunit N from Chlorobium luteolum (strain DSM 273 / BCRC 81028 / 2530) (Pelodictyon luteolum).